Reading from the N-terminus, the 530-residue chain is N-acetylmuramoyl-L-alanine amidase (530 aa).

A signal peptide spans 1–22; it reads MKAWGALWIVLGLLLWPEPGAA. 3 N-linked (GlcNAc...) asparagine glycosylation sites follow: Asn-61, Asn-80, and Asn-174. Ser-219 is modified (phosphoserine). A glycan (N-linked (GlcNAc...) asparagine) is linked at Asn-335. An N-acetylmuramoyl-L-alanine amidase domain is found at 386–512; it reads FLYVHHTYVP…RQLVLTHCPG (127 aa). His-390 is a Zn(2+) binding site. Cysteines 399 and 405 form a disulfide. N-linked (GlcNAc...) asparagine glycosylation is present at Asn-465. The Zn(2+) site is built by His-502 and Cys-510.

The protein belongs to the N-acetylmuramoyl-L-alanine amidase 2 family. Requires Zn(2+) as cofactor. Strongly expressed in liver and fetal liver.

The protein resides in the secreted. It localises to the membrane. The catalysed reaction is Hydrolyzes the link between N-acetylmuramoyl residues and L-amino acid residues in certain cell-wall glycopeptides.. In terms of biological role, may play a scavenger role by digesting biologically active peptidoglycan (PGN) into biologically inactive fragments. Has no direct bacteriolytic activity. The chain is N-acetylmuramoyl-L-alanine amidase (Pglyrp2) from Mus musculus (Mouse).